Here is a 255-residue protein sequence, read N- to C-terminus: Hemin import ATP-binding protein HmuV (255 aa).

Positions 2 to 238 (LDVEGLHLKR…AALNAVFGID (237 aa)) constitute an ABC transporter domain. 34–41 (GPNGAGKS) is an ATP binding site.

Belongs to the ABC transporter superfamily. Heme (hemin) importer (TC 3.A.1.14.5) family. The complex is composed of two ATP-binding proteins (HmuV), two transmembrane proteins (HmuU) and a solute-binding protein (HmuT).

The protein localises to the cell inner membrane. In terms of biological role, part of the ABC transporter complex HmuTUV involved in hemin import. Responsible for energy coupling to the transport system. This is Hemin import ATP-binding protein HmuV from Pseudomonas entomophila (strain L48).